The following is a 434-amino-acid chain: Glutamate-1-semialdehyde 2,1-aminomutase (434 aa).

Lysine 266 is modified (N6-(pyridoxal phosphate)lysine).

The protein belongs to the class-III pyridoxal-phosphate-dependent aminotransferase family. HemL subfamily. As to quaternary structure, homodimer. Pyridoxal 5'-phosphate serves as cofactor.

It is found in the cytoplasm. It carries out the reaction (S)-4-amino-5-oxopentanoate = 5-aminolevulinate. It participates in porphyrin-containing compound metabolism; protoporphyrin-IX biosynthesis; 5-aminolevulinate from L-glutamyl-tRNA(Glu): step 2/2. This Fusobacterium nucleatum subsp. nucleatum (strain ATCC 25586 / DSM 15643 / BCRC 10681 / CIP 101130 / JCM 8532 / KCTC 2640 / LMG 13131 / VPI 4355) protein is Glutamate-1-semialdehyde 2,1-aminomutase.